A 218-amino-acid polypeptide reads, in one-letter code: 3-dehydroquinate dehydratase (218 aa).

Residues 29 to 31 (EFR) and arginine 56 each bind 3-dehydroquinate. The Proton donor/acceptor role is filled by histidine 116. Lysine 142 functions as the Schiff-base intermediate with substrate in the catalytic mechanism. Residues arginine 180, serine 200, and glutamine 204 each contribute to the 3-dehydroquinate site.

This sequence belongs to the type-I 3-dehydroquinase family. As to quaternary structure, homodimer.

The catalysed reaction is 3-dehydroquinate = 3-dehydroshikimate + H2O. It participates in metabolic intermediate biosynthesis; chorismate biosynthesis; chorismate from D-erythrose 4-phosphate and phosphoenolpyruvate: step 3/7. In terms of biological role, involved in the third step of the chorismate pathway, which leads to the biosynthesis of aromatic amino acids. Catalyzes the cis-dehydration of 3-dehydroquinate (DHQ) and introduces the first double bond of the aromatic ring to yield 3-dehydroshikimate. This is 3-dehydroquinate dehydratase from Methanococcus maripaludis (strain C7 / ATCC BAA-1331).